Reading from the N-terminus, the 363-residue chain is Flagellar P-ring protein (363 aa).

A signal peptide spans 1 to 20 (MKCKLIFAVFMLAFSMPSQA).

The protein belongs to the FlgI family. In terms of assembly, the basal body constitutes a major portion of the flagellar organelle and consists of four rings (L,P,S, and M) mounted on a central rod.

Its subcellular location is the periplasm. The protein localises to the bacterial flagellum basal body. Functionally, assembles around the rod to form the L-ring and probably protects the motor/basal body from shearing forces during rotation. The sequence is that of Flagellar P-ring protein from Shewanella oneidensis (strain ATCC 700550 / JCM 31522 / CIP 106686 / LMG 19005 / NCIMB 14063 / MR-1).